The primary structure comprises 572 residues: Methionine--tRNA ligase (572 aa).

Positions 11 to 21 (PYINGIKHLGN) match the 'HIGH' region motif. Residues Cys-143, Cys-146, Cys-156, and Cys-159 each coordinate Zn(2+). Residues 346-350 (QFSTS) carry the 'KMSKS' region motif. Thr-349 contributes to the ATP binding site.

This sequence belongs to the class-I aminoacyl-tRNA synthetase family. MetG type 1 subfamily. Monomer. Zn(2+) serves as cofactor.

It localises to the cytoplasm. It catalyses the reaction tRNA(Met) + L-methionine + ATP = L-methionyl-tRNA(Met) + AMP + diphosphate. Functionally, is required not only for elongation of protein synthesis but also for the initiation of all mRNA translation through initiator tRNA(fMet) aminoacylation. The sequence is that of Methionine--tRNA ligase from Paracoccus denitrificans (strain Pd 1222).